Consider the following 471-residue polypeptide: Secretogranin-3 (471 aa).

An N-terminal signal peptide occupies residues 1–22; it reads MGFLWTGSWILVLVLNSGPIQA. Disordered stretches follow at residues 24–45, 89–108, and 345–404; these read PKPEGSQDKSLHNRELSAERPL, TVEKERQSIRSPPFDNQLNV, and KLEK…TDEA. The segment covering 28 to 45 has biased composition (basic and acidic residues); the sequence is GSQDKSLHNRELSAERPL. Residue Ser40 is modified to Phosphoserine. Ser40 carries O-linked (Xyl...) (chondroitin sulfate) serine glycosylation. 2 stretches are compositionally biased toward basic and acidic residues: residues 345–355 and 364–404; these read KLEKNTTDSKS and KSQE…TDEA. Ser365 carries the phosphoserine modification.

Interacts with CHGA. Interacts with secretogranin II/SCG2. Interacts (via C-terminus) with CPE. Expressed in various brain areas, with highest levels in the arcuate nucleus and the lateral hypothalamic area, as well as the paraventricular nucleus and the ventromedial hypothalamus (at protein level).

It is found in the cytoplasmic vesicle. The protein localises to the secretory vesicle. The protein resides in the secretory vesicle membrane. Its subcellular location is the secreted. Functionally, member of the granin protein family that regulates the biogenesis of secretory granules. Acts as a sorting receptor for intragranular proteins including chromogranin A/CHGA. May also play a role in angiogenesis. Promotes endothelial proliferation, migration and tube formation through MEK/ERK signaling pathway. This is Secretogranin-3 (Scg3) from Mus musculus (Mouse).